The primary structure comprises 348 residues: Dihydroorotase (348 aa).

Residues His-14 and His-16 each coordinate Zn(2+). Substrate-binding positions include 16–18 (HLR) and Asn-42. Positions 100, 137, and 175 each coordinate Zn(2+). Lys-100 is modified (N6-carboxylysine). A substrate-binding site is contributed by His-137. Leu-220 lines the substrate pocket. Residue Asp-248 coordinates Zn(2+). Residue Asp-248 is part of the active site. Residues His-252 and Ala-264 each contribute to the substrate site.

It belongs to the metallo-dependent hydrolases superfamily. DHOase family. Class II DHOase subfamily. In terms of assembly, homodimer. Zn(2+) is required as a cofactor.

The catalysed reaction is (S)-dihydroorotate + H2O = N-carbamoyl-L-aspartate + H(+). It functions in the pathway pyrimidine metabolism; UMP biosynthesis via de novo pathway; (S)-dihydroorotate from bicarbonate: step 3/3. Catalyzes the reversible cyclization of carbamoyl aspartate to dihydroorotate. This is Dihydroorotase from Pseudomonas putida (strain ATCC 47054 / DSM 6125 / CFBP 8728 / NCIMB 11950 / KT2440).